We begin with the raw amino-acid sequence, 722 residues long: DUF724 domain-containing protein 7 (722 aa).

The tract at residues 424–449 (KTTPKKKLQAMKNQKSSTNDSVGEKV) is disordered. A compositionally biased stretch (polar residues) spans 434–444 (MKNQKSSTNDS). A DUF724 domain is found at 540-720 (VLPFVKKSQL…HEFQAILAAP (181 aa)). Residues 645-712 (CALEELKAVE…DQEVQNVDHE (68 aa)) adopt a coiled-coil conformation.

Homodimer. Interacts wtih ABAP1, ARIA and LHP1. Interacts with the non-modified histones H1, H2B, H3 and H4. Expressed in roots, leaves, stems and flowers.

It localises to the nucleus. Functionally, may act as a link between DNA replication, transcription and chromatin remodeling during flower development. May participate in the repression of LHP1-targeted genes during flower development by direct interaction with LHP1. May be involved in the polar growth of plant cells via transportation of RNAs. The protein is DUF724 domain-containing protein 7 of Arabidopsis thaliana (Mouse-ear cress).